A 245-amino-acid chain; its full sequence is MAEDLSAATSYTEDDFYCPVCQEVLKTPVRTTACQHVFCRKCFLTAMRESGAHCPLCRGNVTRRERACPERALDLENIMRKFSGSCRCCAKQIKFYRMRHHYKSCKKYQDEYGVSSIIPNFQISQDSVGNSNRSETSTSDNTETYQENTSSSGHPTFKCPLCQESNFTRQRLLDHCNSNHLFQIVPVTCPICVSLPWGDPSQITRNFVSHLNQRHQFDYGEFVNLQLDEETQYQTAVEESFQVNI.

Ala2 carries the post-translational modification N-acetylalanine. The segment at 18 to 58 (CPVCQEVLKTPVRTTACQHVFCRKCFLTAMRESGAHCPLCR) adopts an RING-type zinc-finger fold. Zn(2+) is bound by residues Cys86, Cys89, His101, and Cys105. A C2HC RNF-type zinc finger spans residues 86–105 (CRCCAKQIKFYRMRHHYKSC). The disordered stretch occupies residues 125–154 (QDSVGNSNRSETSTSDNTETYQENTSSSGH). A Phosphothreonine modification is found at Thr142. 2 C2H2-type zinc fingers span residues 157–180 (FKCP…NSNH) and 187–215 (VTCP…NQRH). Residues 225 to 243 (LQLDEETQYQTAVEESFQV) enclose the UIM domain.

As to quaternary structure, interacts with NLK. Interacts with XRCC5/Ku80. Interacts with RBBP8/CtIP. Post-translationally, auto-ubiquitinated.

The protein resides in the chromosome. It carries out the reaction S-ubiquitinyl-[E2 ubiquitin-conjugating enzyme]-L-cysteine + [acceptor protein]-L-lysine = [E2 ubiquitin-conjugating enzyme]-L-cysteine + N(6)-ubiquitinyl-[acceptor protein]-L-lysine.. It functions in the pathway protein modification; protein ubiquitination. Functionally, E3 ubiquitin-protein ligase involved in DNA damage response by promoting DNA resection and homologous recombination. Recruited to sites of double-strand breaks following DNA damage and specifically promotes double-strand break repair via homologous recombination. Two different, non-exclusive, mechanisms have been proposed. According to a report, regulates the choice of double-strand break repair by favoring homologous recombination over non-homologous end joining (NHEJ): acts by mediating ubiquitination of XRCC5/Ku80, leading to remove the Ku complex from DNA breaks, thereby promoting homologous recombination. According to another report, cooperates with UBE2Ds E2 ubiquitin ligases (UBE2D1, UBE2D2, UBE2D3 or UBE2D4) to promote homologous recombination by mediating ubiquitination of RBBP8/CtIP. Together with NLK, involved in the ubiquitination and degradation of TCF/LEF. Also exhibits auto-ubiquitination activity in combination with UBE2K. May act as a negative regulator in the Wnt/beta-catenin-mediated signaling pathway. This is E3 ubiquitin-protein ligase RNF138 from Homo sapiens (Human).